The following is a 385-amino-acid chain: Single-stranded DNA-binding protein 4 (385 aa).

Position 1 is an N-acetylmethionine (methionine 1). One can recognise a LisH domain in the interval 17–49 (AREKLALYVYEYLLHIGAQKSAQTFLSEIRWEK). Disordered regions lie at residues 122–287 (FQGP…NSSE) and 331–363 (GSGDMDGLPKSSPGAVAGLSNAPGTPRDDGEMA). Residues 245–263 (SPSGNSIPYSSSSPGSYTG) show a composition bias toward low complexity. Over residues 267–277 (GGGPPGTPIMP) the composition is skewed to pro residues. Residue serine 341 is modified to Phosphoserine. Threonine 355 is modified (phosphothreonine).

The protein localises to the nucleus. The sequence is that of Single-stranded DNA-binding protein 4 (SSBP4) from Homo sapiens (Human).